The following is a 558-amino-acid chain: Pentatricopeptide repeat-containing protein At1g06140, mitochondrial (558 aa).

The N-terminal 79 residues, 1–79, are a transit peptide targeting the mitochondrion; that stretch reads MLPVNRARAL…RNRHSWNTIL (79 aa). PPR repeat units lie at residues 38–68, 71–103, 108–142, 143–173, 174–208, 209–243, 245–275, 276–310, 311–345, 346–376, 377–411, 412–447, and 448–482; these read EVVL…IPCW, NRHS…MRRH, DSFN…GLDK, DDYV…IPVR, NSVL…GLAL, DALT…SFID, SDYL…SVDR, NVVM…SILP, NQCT…GIEM, DAVN…MPER, NVIS…NVVP, NSVT…GVVP, and EEEH…PMAS. The tract at residues 483 to 558 is type E motif; sequence AWGALLSACR…HVGQSATEVG (76 aa).

Belongs to the PPR family. PCMP-E subfamily.

Its subcellular location is the mitochondrion. In Arabidopsis thaliana (Mouse-ear cress), this protein is Pentatricopeptide repeat-containing protein At1g06140, mitochondrial (PCMP-E61).